Reading from the N-terminus, the 1358-residue chain is DNA-directed RNA polymerase subunit beta (1358 aa).

It belongs to the RNA polymerase beta chain family. In terms of assembly, the RNAP catalytic core consists of 2 alpha, 1 beta, 1 beta' and 1 omega subunit. When a sigma factor is associated with the core the holoenzyme is formed, which can initiate transcription.

It catalyses the reaction RNA(n) + a ribonucleoside 5'-triphosphate = RNA(n+1) + diphosphate. Its function is as follows. DNA-dependent RNA polymerase catalyzes the transcription of DNA into RNA using the four ribonucleoside triphosphates as substrates. The sequence is that of DNA-directed RNA polymerase subunit beta from Neorickettsia sennetsu (strain ATCC VR-367 / Miyayama) (Ehrlichia sennetsu).